A 646-amino-acid chain; its full sequence is Rho guanine nucleotide exchange factor 7 (646 aa).

The SH3 domain occupies 6–65; the sequence is NSQLVVRAKFNFQQTNEDELSFSKGDVIHVTRVEEGGWWEGTHNGRTGWFPSNYVREIKP. Phosphoserine is present on residues Ser-7, Ser-71, and Ser-79. The DH domain maps to 93–273; the sequence is YYNVVLQNIL…KNLSAQCQEV (181 aa). In terms of domain architecture, PH spans 295–400; it reads DIKTLGSVTY…WVEHLQRQTK (106 aa). Ser-340 is modified (phosphoserine). Disordered stretches follow at residues 402–464 and 500–520; these read TSVS…GPLE and KTMK…DEEF. The segment covering 415 to 428 has biased composition (polar residues); the sequence is PSHTLPSHPLTPSS. Positions 500–512 are enriched in basic residues; sequence KTMKKLLPKRKPE. Phosphoserine is present on residues Ser-516 and Ser-560.

In terms of assembly, interacts with SCRIB; interaction is direct and may play a role in regulation of apoptosis. Interacts with PAK kinases through the SH3 domain. Interacts with GIT1 and probably TGFB1I1. Interacts with ITCH and PARVB. Interacts with FRMPD4 (via N-terminus). Interacts with CaMK1. Interacts with PTK2/FAK1 and RAC1. Interacts with BIN2. Interacts with YWHAZ. Interacts (via PH domain) with NOX1 (via FAD-binding FR-type domain). In terms of processing, phosphorylated on Ser-516 by CaMK1; enhancement of GEF activity and downstream activation of RAC1. Phosphorylated by PTK2/FAK1; this promotes interaction with RAC1.

It localises to the cell junction. Its subcellular location is the focal adhesion. It is found in the cell projection. The protein resides in the ruffle. The protein localises to the cytoplasm. It localises to the cell cortex. Its subcellular location is the lamellipodium. Its function is as follows. Acts as a RAC1 guanine nucleotide exchange factor (GEF) and can induce membrane ruffling. Functions in cell migration, attachment and cell spreading. Promotes targeting of RAC1 to focal adhesions. May function as a positive regulator of apoptosis. Downstream of NMDA receptors and CaMKK-CaMK1 signaling cascade, promotes the formation of spines and synapses in hippocampal neurons. This Rattus norvegicus (Rat) protein is Rho guanine nucleotide exchange factor 7 (Arhgef7).